A 1021-amino-acid polypeptide reads, in one-letter code: Nonribosomal peptide synthetase asaC (1021 aa).

The segment at 17-418 is adenylation (A) domain; that stretch reads RHHVRTSPNA…ARADNMVKIR (402 aa). Positions 528 to 603 constitute a Carrier domain; it reads KDAGDSVTWL…GLASVIDAGH (76 aa). The residue at position 563 (serine 563) is an O-(pantetheine 4'-phosphoryl)serine. The tract at residues 646 to 888 is short-chain dehydrogenase/reductase (R) domain; that stretch reads LTGATGFLGT…MIPVDFITTA (243 aa).

Belongs to the NRP synthetase family.

It participates in secondary metabolite biosynthesis. Functionally, nonribosomal peptide synthetase; part of the gene cluster that mediates the biosynthesis of aspergillic acid, a hydroxamic acid-containing pyrazinone with aliphatic side chains that originates from leucine (Leu) and isoleucine (Ile). Aspergillic acid has antibiotic properties and was shown to be lethal to mice. The first step in the pathway is the production of deoxyaspergillic acid via a condensation between the Ile amine and the Leu carboxylic acid, followed by a reductive release from the protein forming the dipeptide aldehyde NH(2)-Leu-Ile-CHO, which could undergo an intermolecular cyclization resulting in a dihydropyrazinone. As the NRPS asaC lacks a condensation domain, it is improbable that it is responsible for condensation of Leu and Ile. One possibility is that asaC acts on a previously condensed dipeptide and functions as a Leu-Ile reductase to yield deoxyaspergillic acid. After asaC forms deoxyaspergillic acid, the cytochrome P450 asaD oxidizes the pyrazinone to the hydroxamic acid-containing bioactive metabolite aspergillic acid. The hydroxylase/desaturase asaB can then convert aspergillic acid to hydroxyaspergillic acid. Both aspergillic acid and hydroxyaspergillic acid can form complexes with iron producing ferriaspergillin analogs. The polypeptide is Nonribosomal peptide synthetase asaC (Aspergillus flavus (strain ATCC 200026 / FGSC A1120 / IAM 13836 / NRRL 3357 / JCM 12722 / SRRC 167)).